The primary structure comprises 86 residues: Large ribosomal subunit protein bL31B (86 aa).

Belongs to the bacterial ribosomal protein bL31 family. Type B subfamily. Part of the 50S ribosomal subunit.

The sequence is that of Large ribosomal subunit protein bL31B from Burkholderia cenocepacia (strain ATCC BAA-245 / DSM 16553 / LMG 16656 / NCTC 13227 / J2315 / CF5610) (Burkholderia cepacia (strain J2315)).